We begin with the raw amino-acid sequence, 348 residues long: NADH-quinone oxidoreductase subunit H 1 (348 aa).

A run of 8 helical transmembrane segments spans residues 11–31, 83–103, 136–156, 172–192, 208–228, 268–288, 289–309, and 324–344; these read IYYI…LLTV, FAFL…FAVI, VGVL…VLAG, SAQM…VFML, GAWY…CSLA, MVTV…GPAF, LPGW…CMWI, and LGWK…GIVV.

Belongs to the complex I subunit 1 family. As to quaternary structure, NDH-1 is composed of 14 different subunits. Subunits NuoA, H, J, K, L, M, N constitute the membrane sector of the complex.

The protein localises to the cell inner membrane. The catalysed reaction is a quinone + NADH + 5 H(+)(in) = a quinol + NAD(+) + 4 H(+)(out). Functionally, NDH-1 shuttles electrons from NADH, via FMN and iron-sulfur (Fe-S) centers, to quinones in the respiratory chain. The immediate electron acceptor for the enzyme in this species is believed to be ubiquinone. Couples the redox reaction to proton translocation (for every two electrons transferred, four hydrogen ions are translocated across the cytoplasmic membrane), and thus conserves the redox energy in a proton gradient. This subunit may bind ubiquinone. This Geobacter sulfurreducens (strain ATCC 51573 / DSM 12127 / PCA) protein is NADH-quinone oxidoreductase subunit H 1.